Here is a 663-residue protein sequence, read N- to C-terminus: Inner nuclear membrane protein HEH2 (663 aa).

Disordered regions lie at residues 46–188 (QRLQ…ELPN) and 267–289 (ISET…KNIR). The span at 47 to 62 (RLQSSPEASKVRTSIQ) shows a compositional bias: polar residues. A compositionally biased stretch (basic and acidic residues) spans 91–123 (KTVKDENVETNKRKREQISTDNEAKMQIQEEKS). Residue serine 123 is modified to Phosphoserine. Positions 124–134 (PKKKRKKRSSK) are enriched in basic residues. The Nuclear localization signal motif lies at 124-137 (PKKKRKKRSSKANK). A compositionally biased stretch (basic and acidic residues) spans 164–183 (EELHKKDSSDDKPRVKELPK). The helical transmembrane segment at 317-337 (LFIWLWNGAIFLSIICPILFG) threads the bilayer.

In terms of assembly, interacts with SRP1.

It is found in the nucleus inner membrane. The sequence is that of Inner nuclear membrane protein HEH2 (HEH2) from Saccharomyces cerevisiae (strain ATCC 204508 / S288c) (Baker's yeast).